The primary structure comprises 487 residues: Serine/threonine-protein kinase BSK8 (487 aa).

Residue Gly2 is the site of N-myristoyl glycine attachment. A Phosphoserine modification is found at Ser20. Positions 59–325 constitute a Protein kinase domain; sequence ENIVSEHGER…DLEIASHQLL (267 aa). ATP-binding positions include 65 to 73, Asn71, Lys87, and 133 to 135; these read HGERAPNVV and EFM. The active-site Proton acceptor is the Asp181. Residues 185 to 186 and Asn205 contribute to the ATP site; that span reads YR. Residue Ser213 is modified to Phosphoserine.

Belongs to the protein kinase superfamily. Ser/Thr protein kinase family. As to quaternary structure, interacts with ASK7/BIN2, BSK1, BSK5, BSK6 and BSK11. Interacts with BSL2. Post-translationally, phosphorylated by BRI1, ASK7/BIN2 and ASK9/BIL2.

Its subcellular location is the cell membrane. The catalysed reaction is L-seryl-[protein] + ATP = O-phospho-L-seryl-[protein] + ADP + H(+). It carries out the reaction L-threonyl-[protein] + ATP = O-phospho-L-threonyl-[protein] + ADP + H(+). Functionally, probable serine/threonine kinase that acts as a positive regulator of brassinosteroid (BR) signaling downstream of the receptor kinase BRI1. Functions redundantly with BSK3, BSK4, BSK6 and BSK7. Involved in the regulation of sucrose-phosphate synthase 1 (SPS1) in the context of sucrose resuply after starvation. Activates BSL2, a phosphatase that may dephosphorylate SPS1, leading to the activation of SPS1. In Arabidopsis thaliana (Mouse-ear cress), this protein is Serine/threonine-protein kinase BSK8.